An 82-amino-acid chain; its full sequence is Putative antitoxin RelB1 (82 aa).

In terms of biological role, antitoxin component of a type II toxin-antitoxin (TA) system. Its cognate toxin is RelE1 (Potential). The polypeptide is Putative antitoxin RelB1 (relB1) (Methanocaldococcus jannaschii (strain ATCC 43067 / DSM 2661 / JAL-1 / JCM 10045 / NBRC 100440) (Methanococcus jannaschii)).